We begin with the raw amino-acid sequence, 921 residues long: Probable dipeptidyl-aminopeptidase B (921 aa).

Disordered regions lie at residues 1-33 and 45-66; these read MAGH…TAST and VAAN…RGER. The Cytoplasmic portion of the chain corresponds to 1-109; that stretch reads MAGHPEENAQ…NKSVDKKLRR (109 aa). The span at 10–22 shows a compositional bias: polar residues; that stretch reads QLLSTEQESMSRN. Positions 23-33 are enriched in low complexity; the sequence is SSDSVASTAST. The helical; Signal-anchor for type II membrane protein transmembrane segment at 110 to 130 threads the bilayer; sequence LIWIIGGVFIGAWVLALFIFL. The Vacuolar portion of the chain corresponds to 131–921; that stretch reads GKQAYKHSSE…VPLEIDAAKV (791 aa). Residues 138–157 are disordered; that stretch reads SSESPHDPQATSSRGSGKKV. N-linked (GlcNAc...) asparagine glycosylation is present at Asn362. The active-site Charge relay system is Ser768. Asn822 carries N-linked (GlcNAc...) asparagine glycosylation. Residues Asp845 and His878 each act as charge relay system in the active site.

It belongs to the peptidase S9B family.

It is found in the vacuole membrane. It catalyses the reaction Release of an N-terminal dipeptide, Xaa-Yaa-|-Zaa-, from a polypeptide, preferentially when Yaa is Pro, provided Zaa is neither Pro nor hydroxyproline.. Type IV dipeptidyl-peptidase which removes N-terminal dipeptides sequentially from polypeptides having unsubstituted N-termini provided that the penultimate residue is proline. This Botryotinia fuckeliana (strain B05.10) (Noble rot fungus) protein is Probable dipeptidyl-aminopeptidase B (dapB).